The following is a 578-amino-acid chain: CTP synthase 2 (578 aa).

A Glutamine amidotransferase type-1 domain is found at 305–564 (KIALVGKYTN…VAAASGTLGE (260 aa)). Residues Cys404, His537, and Glu539 each act as for GATase activity in the active site.

This sequence belongs to the CTP synthase family. Homodimer. Oligomerizes to a tetramer in the presence of its substrates UTP and ATP. Requires Mg(2+) as cofactor.

The protein localises to the cytoplasm. The catalysed reaction is UTP + L-glutamine + ATP + H2O = CTP + L-glutamate + ADP + phosphate + 2 H(+). It functions in the pathway pyrimidine metabolism; CTP biosynthesis via de novo pathway; CTP from UDP: step 2/2. Its activity is regulated as follows. Activated by GTP. Subject to allosteric product inhibition by CTP. Inhibited by p-chloromercuriphenylsulfonic acid, N-ethylmaleimide and cyclopentenylcytosine (CPEC). Its function is as follows. Catalyzes the ATP-dependent amination of UTP to CTP with either L-glutamine or ammonia as the source of nitrogen. Plays an important role in the regulation of phospholipid synthesis. This Saccharomyces cerevisiae (strain ATCC 204508 / S288c) (Baker's yeast) protein is CTP synthase 2 (URA8).